The sequence spans 189 residues: Peptidyl-tRNA hydrolase (189 aa).

Tyr14 contributes to the tRNA binding site. The active-site Proton acceptor is the His19. Positions 64, 66, and 112 each coordinate tRNA.

It belongs to the PTH family. In terms of assembly, monomer.

It localises to the cytoplasm. The catalysed reaction is an N-acyl-L-alpha-aminoacyl-tRNA + H2O = an N-acyl-L-amino acid + a tRNA + H(+). Functionally, hydrolyzes ribosome-free peptidyl-tRNAs (with 1 or more amino acids incorporated), which drop off the ribosome during protein synthesis, or as a result of ribosome stalling. In terms of biological role, catalyzes the release of premature peptidyl moieties from peptidyl-tRNA molecules trapped in stalled 50S ribosomal subunits, and thus maintains levels of free tRNAs and 50S ribosomes. The chain is Peptidyl-tRNA hydrolase from Clostridium botulinum (strain Langeland / NCTC 10281 / Type F).